A 252-amino-acid chain; its full sequence is Imidazole glycerol phosphate synthase subunit HisF (252 aa).

Active-site residues include aspartate 11 and aspartate 130.

Belongs to the HisA/HisF family. In terms of assembly, heterodimer of HisH and HisF.

Its subcellular location is the cytoplasm. It carries out the reaction 5-[(5-phospho-1-deoxy-D-ribulos-1-ylimino)methylamino]-1-(5-phospho-beta-D-ribosyl)imidazole-4-carboxamide + L-glutamine = D-erythro-1-(imidazol-4-yl)glycerol 3-phosphate + 5-amino-1-(5-phospho-beta-D-ribosyl)imidazole-4-carboxamide + L-glutamate + H(+). It participates in amino-acid biosynthesis; L-histidine biosynthesis; L-histidine from 5-phospho-alpha-D-ribose 1-diphosphate: step 5/9. Functionally, IGPS catalyzes the conversion of PRFAR and glutamine to IGP, AICAR and glutamate. The HisF subunit catalyzes the cyclization activity that produces IGP and AICAR from PRFAR using the ammonia provided by the HisH subunit. In Petrotoga mobilis (strain DSM 10674 / SJ95), this protein is Imidazole glycerol phosphate synthase subunit HisF.